We begin with the raw amino-acid sequence, 165 residues long: 6,7-dimethyl-8-ribityllumazine synthase (165 aa).

5-amino-6-(D-ribitylamino)uracil is bound by residues F24, 62–64 (AFE), and 86–88 (AVI). Position 91–92 (91–92 (DT)) interacts with (2S)-2-hydroxy-3-oxobutyl phosphate. H94 functions as the Proton donor in the catalytic mechanism. A 5-amino-6-(D-ribitylamino)uracil-binding site is contributed by F119. R133 is a (2S)-2-hydroxy-3-oxobutyl phosphate binding site.

Belongs to the DMRL synthase family.

The enzyme catalyses (2S)-2-hydroxy-3-oxobutyl phosphate + 5-amino-6-(D-ribitylamino)uracil = 6,7-dimethyl-8-(1-D-ribityl)lumazine + phosphate + 2 H2O + H(+). It functions in the pathway cofactor biosynthesis; riboflavin biosynthesis; riboflavin from 2-hydroxy-3-oxobutyl phosphate and 5-amino-6-(D-ribitylamino)uracil: step 1/2. In terms of biological role, catalyzes the formation of 6,7-dimethyl-8-ribityllumazine by condensation of 5-amino-6-(D-ribitylamino)uracil with 3,4-dihydroxy-2-butanone 4-phosphate. This is the penultimate step in the biosynthesis of riboflavin. This Prochlorococcus marinus (strain MIT 9303) protein is 6,7-dimethyl-8-ribityllumazine synthase.